A 610-amino-acid chain; its full sequence is Dihydroxy-acid dehydratase (610 aa).

Residue aspartate 81 participates in Mg(2+) binding. Cysteine 122 provides a ligand contact to [2Fe-2S] cluster. Mg(2+) is bound by residues aspartate 123 and lysine 124. An N6-carboxylysine modification is found at lysine 124. Residue cysteine 193 coordinates [2Fe-2S] cluster. Residue glutamate 489 coordinates Mg(2+). Serine 515 functions as the Proton acceptor in the catalytic mechanism.

Belongs to the IlvD/Edd family. As to quaternary structure, homodimer. Requires [2Fe-2S] cluster as cofactor. Mg(2+) serves as cofactor.

It carries out the reaction (2R)-2,3-dihydroxy-3-methylbutanoate = 3-methyl-2-oxobutanoate + H2O. It catalyses the reaction (2R,3R)-2,3-dihydroxy-3-methylpentanoate = (S)-3-methyl-2-oxopentanoate + H2O. Its pathway is amino-acid biosynthesis; L-isoleucine biosynthesis; L-isoleucine from 2-oxobutanoate: step 3/4. It functions in the pathway amino-acid biosynthesis; L-valine biosynthesis; L-valine from pyruvate: step 3/4. Functionally, functions in the biosynthesis of branched-chain amino acids. Catalyzes the dehydration of (2R,3R)-2,3-dihydroxy-3-methylpentanoate (2,3-dihydroxy-3-methylvalerate) into 2-oxo-3-methylpentanoate (2-oxo-3-methylvalerate) and of (2R)-2,3-dihydroxy-3-methylbutanoate (2,3-dihydroxyisovalerate) into 2-oxo-3-methylbutanoate (2-oxoisovalerate), the penultimate precursor to L-isoleucine and L-valine, respectively. The chain is Dihydroxy-acid dehydratase from Xylella fastidiosa (strain M23).